The sequence spans 410 residues: Argininosuccinate synthase (410 aa).

ATP-binding positions include 13–21 (AYSGGLDTS) and Ala-40. Positions 91 and 96 each coordinate L-citrulline. Gly-121 provides a ligand contact to ATP. L-aspartate is bound by residues Thr-123, Asn-127, and Asp-128. Asn-127 provides a ligand contact to L-citrulline. L-citrulline is bound by residues Arg-131, Ser-182, Ser-191, Glu-267, and Tyr-279.

This sequence belongs to the argininosuccinate synthase family. Type 1 subfamily. Homotetramer.

The protein localises to the cytoplasm. It catalyses the reaction L-citrulline + L-aspartate + ATP = 2-(N(omega)-L-arginino)succinate + AMP + diphosphate + H(+). It participates in amino-acid biosynthesis; L-arginine biosynthesis; L-arginine from L-ornithine and carbamoyl phosphate: step 2/3. This Maricaulis maris (strain MCS10) (Caulobacter maris) protein is Argininosuccinate synthase.